The following is a 78-amino-acid chain: Defensin SD2 (78 aa).

Residues 1–20 form the signal peptide; the sequence is MKSSMKMFAALLLVVMCLLA. 4 cysteine pairs are disulfide-bonded: Cys-34–Cys-78, Cys-45–Cys-65, Cys-51–Cys-72, and Cys-55–Cys-74.

This sequence belongs to the DEFL family. As to expression, highest expression in flowers and to a lesser extent in leaves. Lower levels in hypocotyls. No expression in roots and cotyledons.

It localises to the secreted. Its subcellular location is the cell wall. Functionally, may play a protective role in flowers by protecting the reproductive organs from potential pathogen attack. The chain is Defensin SD2 (SD2) from Helianthus annuus (Common sunflower).